A 688-amino-acid chain; its full sequence is Elongation factor G (688 aa).

One can recognise a tr-type G domain in the interval 8 to 282; the sequence is DKFRNFGIMA…GVVDYLPSPL (275 aa). GTP is bound by residues 17–24, 81–85, and 135–138; these read AHIDAGKT, DTPGH, and NKMD.

The protein belongs to the TRAFAC class translation factor GTPase superfamily. Classic translation factor GTPase family. EF-G/EF-2 subfamily.

The protein resides in the cytoplasm. Catalyzes the GTP-dependent ribosomal translocation step during translation elongation. During this step, the ribosome changes from the pre-translocational (PRE) to the post-translocational (POST) state as the newly formed A-site-bound peptidyl-tRNA and P-site-bound deacylated tRNA move to the P and E sites, respectively. Catalyzes the coordinated movement of the two tRNA molecules, the mRNA and conformational changes in the ribosome. This chain is Elongation factor G, found in Clostridium botulinum (strain Eklund 17B / Type B).